We begin with the raw amino-acid sequence, 292 residues long: Ribonuclease T2-like (292 aa).

The N-terminal stretch at 1-23 (MAKTASAMLFLYLLLSRCLLSHA) is a signal peptide. Intrachain disulfides connect cysteine 42–cysteine 61, cysteine 50–cysteine 103, cysteine 60–cysteine 177, cysteine 111–cysteine 169, and cysteine 246–cysteine 280. Asparagine 52 carries an N-linked (GlcNAc...) asparagine glycan. Residues histidine 96, glutamate 162, and histidine 166 contribute to the active site.

It belongs to the RNase T2 family.

The protein resides in the vacuole lumen. The protein localises to the cytoplasm. The enzyme catalyses a ribonucleotidyl-ribonucleotide-RNA + H2O = a 3'-end 3'-phospho-ribonucleotide-RNA + a 5'-end dephospho-ribonucleoside-RNA + H(+). In terms of biological role, rnase which modulates cell survival under stress conditions. Released from the vacuole to the cytoplasm during stress to promote tRNA and rRNA cleavage and to activate separately a downstream pathway that promotes cell death. Involved in cell size, vacuolar morphology and growth at high temperatures and high salt concentration. The sequence is that of Ribonuclease T2-like (RNY1) from Eremothecium gossypii (strain ATCC 10895 / CBS 109.51 / FGSC 9923 / NRRL Y-1056) (Yeast).